The chain runs to 221 residues: MKVGAVIVAAGRGVRAGGGIPKQWRALHKGTVAQASIRAFTGHADIRDVVLVLHPDDIDTDLWPREPGLIVASGGASRSASVLAGLRMLNGKTDAVLIHDAARPCVTTRVIDDVISALRTAQAAAPAVAVVDALWTGENGQVTGTADRTGLYRAQTPQGFHLDAIIKAHRQFPEGAADDVEVARRAGLDVVIVPGDEDNLKITLPGDFARAEAILRARDGH.

This sequence belongs to the IspD/TarI cytidylyltransferase family. IspD subfamily.

It catalyses the reaction 2-C-methyl-D-erythritol 4-phosphate + CTP + H(+) = 4-CDP-2-C-methyl-D-erythritol + diphosphate. It participates in isoprenoid biosynthesis; isopentenyl diphosphate biosynthesis via DXP pathway; isopentenyl diphosphate from 1-deoxy-D-xylulose 5-phosphate: step 2/6. Functionally, catalyzes the formation of 4-diphosphocytidyl-2-C-methyl-D-erythritol from CTP and 2-C-methyl-D-erythritol 4-phosphate (MEP). This is 2-C-methyl-D-erythritol 4-phosphate cytidylyltransferase from Roseobacter denitrificans (strain ATCC 33942 / OCh 114) (Erythrobacter sp. (strain OCh 114)).